Reading from the N-terminus, the 213-residue chain is Proteasome subunit beta (213 aa).

A propeptide spans 1–11 (removed in mature form; by autocatalysis); that stretch reads MSMIEEKIYKG. Residue T12 is the Nucleophile of the active site.

The protein belongs to the peptidase T1B family. In terms of assembly, the 20S proteasome core is composed of 14 alpha and 14 beta subunits that assemble into four stacked heptameric rings, resulting in a barrel-shaped structure. The two inner rings, each composed of seven catalytic beta subunits, are sandwiched by two outer rings, each composed of seven alpha subunits. The catalytic chamber with the active sites is on the inside of the barrel. Has probably a gated structure, the ends of the cylinder being occluded by the N-termini of the alpha-subunits. Is likely capped at one or both ends by the proteasome regulatory ATPase, PAN.

The protein localises to the cytoplasm. The enzyme catalyses Cleavage of peptide bonds with very broad specificity.. Its activity is regulated as follows. The formation of the proteasomal ATPase PAN-20S proteasome complex, via the docking of the C-termini of PAN into the intersubunit pockets in the alpha-rings, triggers opening of the gate for substrate entry. Interconversion between the open-gate and close-gate conformations leads to a dynamic regulation of the 20S proteasome proteolysis activity. In terms of biological role, component of the proteasome core, a large protease complex with broad specificity involved in protein degradation. This chain is Proteasome subunit beta, found in Archaeoglobus fulgidus (strain ATCC 49558 / DSM 4304 / JCM 9628 / NBRC 100126 / VC-16).